Reading from the N-terminus, the 98-residue chain is NADH-ubiquinone oxidoreductase chain 4L (98 aa).

3 consecutive transmembrane segments (helical) span residues 1–21 (MSLT…GLLM), 29–49 (ALLC…ITIL), and 61–81 (IILL…LVMV).

This sequence belongs to the complex I subunit 4L family. As to quaternary structure, core subunit of respiratory chain NADH dehydrogenase (Complex I) which is composed of 45 different subunits.

The protein resides in the mitochondrion inner membrane. The enzyme catalyses a ubiquinone + NADH + 5 H(+)(in) = a ubiquinol + NAD(+) + 4 H(+)(out). In terms of biological role, core subunit of the mitochondrial membrane respiratory chain NADH dehydrogenase (Complex I) which catalyzes electron transfer from NADH through the respiratory chain, using ubiquinone as an electron acceptor. Part of the enzyme membrane arm which is embedded in the lipid bilayer and involved in proton translocation. This is NADH-ubiquinone oxidoreductase chain 4L (MT-ND4L) from Rhinophylla pumilio (Dwarf little fruit bat).